A 428-amino-acid polypeptide reads, in one-letter code: Gamma-glutamyl phosphate reductase (428 aa).

Belongs to the gamma-glutamyl phosphate reductase family.

It localises to the cytoplasm. The catalysed reaction is L-glutamate 5-semialdehyde + phosphate + NADP(+) = L-glutamyl 5-phosphate + NADPH + H(+). It participates in amino-acid biosynthesis; L-proline biosynthesis; L-glutamate 5-semialdehyde from L-glutamate: step 2/2. In terms of biological role, catalyzes the NADPH-dependent reduction of L-glutamate 5-phosphate into L-glutamate 5-semialdehyde and phosphate. The product spontaneously undergoes cyclization to form 1-pyrroline-5-carboxylate. This Picosynechococcus sp. (strain ATCC 27264 / PCC 7002 / PR-6) (Agmenellum quadruplicatum) protein is Gamma-glutamyl phosphate reductase.